The following is a 283-amino-acid chain: Phosphatidylglycerol--prolipoprotein diacylglyceryl transferase (283 aa).

7 consecutive transmembrane segments (helical) span residues 21–41, 60–80, 95–115, 124–144, 176–196, 203–223, and 239–259; these read LAVR…LWLA, LLFA…VLFY, VWTG…AMLW, FFTI…AGRL, SQLY…NWFI, GAVS…VEYV, and MGQI…LWAF. An a 1,2-diacyl-sn-glycero-3-phospho-(1'-sn-glycerol)-binding site is contributed by arginine 143.

It belongs to the Lgt family.

It is found in the cell inner membrane. It carries out the reaction L-cysteinyl-[prolipoprotein] + a 1,2-diacyl-sn-glycero-3-phospho-(1'-sn-glycerol) = an S-1,2-diacyl-sn-glyceryl-L-cysteinyl-[prolipoprotein] + sn-glycerol 1-phosphate + H(+). The protein operates within protein modification; lipoprotein biosynthesis (diacylglyceryl transfer). Functionally, catalyzes the transfer of the diacylglyceryl group from phosphatidylglycerol to the sulfhydryl group of the N-terminal cysteine of a prolipoprotein, the first step in the formation of mature lipoproteins. This is Phosphatidylglycerol--prolipoprotein diacylglyceryl transferase from Aliivibrio fischeri (strain MJ11) (Vibrio fischeri).